We begin with the raw amino-acid sequence, 154 residues long: Ribosomal RNA large subunit methyltransferase H (154 aa).

S-adenosyl-L-methionine-binding positions include Leu-70, Gly-102, and 121-126; that span reads LSRMTL.

Belongs to the RNA methyltransferase RlmH family. As to quaternary structure, homodimer.

It localises to the cytoplasm. The catalysed reaction is pseudouridine(1915) in 23S rRNA + S-adenosyl-L-methionine = N(3)-methylpseudouridine(1915) in 23S rRNA + S-adenosyl-L-homocysteine + H(+). Its function is as follows. Specifically methylates the pseudouridine at position 1915 (m3Psi1915) in 23S rRNA. The polypeptide is Ribosomal RNA large subunit methyltransferase H (Citrifermentans bemidjiense (strain ATCC BAA-1014 / DSM 16622 / JCM 12645 / Bem) (Geobacter bemidjiensis)).